Here is a 290-residue protein sequence, read N- to C-terminus: Small ribosomal subunit protein bS6 (290 aa).

Positions 208-233 (VEEAKTTAKKPAAPKMSAAERAKVDG) are disordered.

The protein belongs to the bacterial ribosomal protein bS6 family.

In terms of biological role, binds together with bS18 to 16S ribosomal RNA. This chain is Small ribosomal subunit protein bS6, found in Mesoplasma florum (strain ATCC 33453 / NBRC 100688 / NCTC 11704 / L1) (Acholeplasma florum).